The sequence spans 159 residues: NADH-quinone oxidoreductase subunit B (159 aa).

4 residues coordinate [4Fe-4S] cluster: Cys-36, Cys-37, Cys-102, and Cys-132.

This sequence belongs to the complex I 20 kDa subunit family. In terms of assembly, NDH-1 is composed of 14 different subunits. Subunits NuoB, C, D, E, F, and G constitute the peripheral sector of the complex. [4Fe-4S] cluster is required as a cofactor.

The protein resides in the cell inner membrane. It catalyses the reaction a quinone + NADH + 5 H(+)(in) = a quinol + NAD(+) + 4 H(+)(out). NDH-1 shuttles electrons from NADH, via FMN and iron-sulfur (Fe-S) centers, to quinones in the respiratory chain. Couples the redox reaction to proton translocation (for every two electrons transferred, four hydrogen ions are translocated across the cytoplasmic membrane), and thus conserves the redox energy in a proton gradient. This Albidiferax ferrireducens (strain ATCC BAA-621 / DSM 15236 / T118) (Rhodoferax ferrireducens) protein is NADH-quinone oxidoreductase subunit B.